The primary structure comprises 93 residues: UPF0473 protein RBAM_024480 (93 aa).

The protein belongs to the UPF0473 family.

The chain is UPF0473 protein RBAM_024480 from Bacillus velezensis (strain DSM 23117 / BGSC 10A6 / LMG 26770 / FZB42) (Bacillus amyloliquefaciens subsp. plantarum).